A 467-amino-acid chain; its full sequence is Probable endopeptidase p60 (467 aa).

An N-terminal signal peptide occupies residues 1 to 27; sequence MNMKKATIAATAGIAVTAFAAPTIASA. One can recognise a LysM 1 domain in the interval 28–71; sequence STVVVEAGDTLWGIAQSKGTTVDAIKKANNLTTDKIVPGQKLQV. In terms of domain architecture, SH3b spans 79–143; sequence KAEKSVSATW…VNGKYLTDKA (65 aa). Disordered regions lie at residues 154–199 and 247–348; these read KKET…QNAT and KTVA…GSTN. Residues 172 to 185 show a composition bias toward low complexity; it reads KQPTTQQTAPAPKA. Positions 199–242 constitute a LysM 2 domain; it reads TTHNVKSGDTIWALSVKYGVSVQDIMSWNNLSSSSIYVGQKLAI. Residues 288–348 show a composition bias toward low complexity; sequence TEQQTTTKAP…NTNTNQGSTN (61 aa). The segment at 330–343 is 7 X 2 AA tandem repeats of T-N; the sequence is TNTNTNTNTNTNTN. One can recognise a NlpC/P60 domain in the interval 349–467; sequence NASASALIAE…GKFLVGFGRV (119 aa). Residue Cys379 is the Nucleophile of the active site. The active-site Proton acceptor is the His429. Asn441 is a catalytic residue.

This sequence belongs to the peptidase C40 family.

Its function is as follows. This major extracellular protein may be involved in the invasion of non-professional phagocytic cells by Listeria. This chain is Probable endopeptidase p60 (iap), found in Listeria innocua serovar 6a (strain ATCC BAA-680 / CLIP 11262).